We begin with the raw amino-acid sequence, 397 residues long: Argininosuccinate synthase (397 aa).

9–17 (AYSGGLDTS) is an ATP binding site. Residue tyrosine 87 participates in L-citrulline binding. Residue glycine 117 coordinates ATP. L-aspartate contacts are provided by threonine 119, asparagine 123, and aspartate 124. Position 123 (asparagine 123) interacts with L-citrulline. L-citrulline-binding residues include arginine 127, serine 175, serine 184, glutamate 260, and tyrosine 272.

Belongs to the argininosuccinate synthase family. Type 1 subfamily. As to quaternary structure, homotetramer.

It localises to the cytoplasm. The enzyme catalyses L-citrulline + L-aspartate + ATP = 2-(N(omega)-L-arginino)succinate + AMP + diphosphate + H(+). It participates in amino-acid biosynthesis; L-arginine biosynthesis; L-arginine from L-ornithine and carbamoyl phosphate: step 2/3. The chain is Argininosuccinate synthase from Methanococcus maripaludis (strain DSM 14266 / JCM 13030 / NBRC 101832 / S2 / LL).